Reading from the N-terminus, the 261-residue chain is Glucose 1-dehydrogenase (261 aa).

11–35 contacts NADP(+); that stretch reads AITGAASGLGKAMAIRFGKEQAKVV. Residue Ser145 participates in substrate binding. The Proton acceptor role is filled by Tyr158.

This sequence belongs to the short-chain dehydrogenases/reductases (SDR) family. In terms of assembly, homotetramer.

It carries out the reaction D-glucose + NAD(+) = D-glucono-1,5-lactone + NADH + H(+). The catalysed reaction is D-glucose + NADP(+) = D-glucono-1,5-lactone + NADPH + H(+). The sequence is that of Glucose 1-dehydrogenase (gdh) from Bacillus subtilis (strain 168).